Reading from the N-terminus, the 438-residue chain is Delta(14)-sterol reductase ERG24 (438 aa).

Over Met1 to Glu13 the chain is Lumenal. The helical transmembrane segment at Phe14–Leu34 threads the bilayer. Residues Asn35 to Glu71 lie on the Cytoplasmic side of the membrane. The chain crosses the membrane as a helical span at residues Leu72–Leu90. Residues Pro91–Lys109 lie on the Lumenal side of the membrane. Residues Ile110–Trp127 form a helical membrane-spanning segment. Topologically, residues Lys128 to Leu147 are cytoplasmic. Residues Cys148–Phe172 form a helical membrane-spanning segment. The Lumenal segment spans residues Lys173–Lys242. The chain crosses the membrane as a helical span at residues Ile243 to Leu263. The Cytoplasmic segment spans residues Asn264–Glu308. The chain crosses the membrane as a helical span at residues Leu309–Phe328. Over His329–His368 the chain is Lumenal. NADP(+)-binding positions include Lys335, Arg339, Leu358, Trp363, Asn370–Tyr371, Asp410, Cys414–Tyr418, and Tyr425. Residues Ile369 to Phe387 traverse the membrane as a helical segment. Residues Gln388–Tyr438 are Cytoplasmic-facing.

It belongs to the ERG4/ERG24 family.

It is found in the membrane. It catalyses the reaction 4,4-dimethyl-5alpha-cholesta-8,24-dien-3beta-ol + NADP(+) = 4,4-dimethyl-5alpha-cholesta-8,14,24-trien-3beta-ol + NADPH + H(+). It functions in the pathway steroid biosynthesis; zymosterol biosynthesis; zymosterol from lanosterol: step 2/6. With respect to regulation, inhibited by the morpholine antifungal drug fenpropimorph. In terms of biological role, delta(14)-sterol reductase; part of the third module of ergosterol biosynthesis pathway that includes the late steps of the pathway. ERG24 reduces the C14=C15 double bond of 4,4-dimethyl-cholesta-8,14,24-trienol to produce 4,4-dimethyl-cholesta-8,24-dienol. The third module or late pathway involves the ergosterol synthesis itself through consecutive reactions that mainly occur in the endoplasmic reticulum (ER) membrane. Firstly, the squalene synthase ERG9 catalyzes the condensation of 2 farnesyl pyrophosphate moieties to form squalene, which is the precursor of all steroids. Squalene synthase is crucial for balancing the incorporation of farnesyl diphosphate (FPP) into sterol and nonsterol isoprene synthesis. Secondly, the squalene epoxidase ERG1 catalyzes the stereospecific oxidation of squalene to (S)-2,3-epoxysqualene, which is considered to be a rate-limiting enzyme in steroid biosynthesis. Then, the lanosterol synthase ERG7 catalyzes the cyclization of (S)-2,3 oxidosqualene to lanosterol, a reaction that forms the sterol core. In the next steps, lanosterol is transformed to zymosterol through a complex process involving various demethylation, reduction and desaturation reactions. The lanosterol 14-alpha-demethylase ERG11 (also known as CYP51) catalyzes C14-demethylation of lanosterol to produce 4,4'-dimethyl cholesta-8,14,24-triene-3-beta-ol, which is critical for ergosterol biosynthesis. The C-14 reductase ERG24 reduces the C14=C15 double bond of 4,4-dimethyl-cholesta-8,14,24-trienol to produce 4,4-dimethyl-cholesta-8,24-dienol. 4,4-dimethyl-cholesta-8,24-dienol is substrate of the C-4 demethylation complex ERG25-ERG26-ERG27 in which ERG25 catalyzes the three-step monooxygenation required for the demethylation of 4,4-dimethyl and 4alpha-methylsterols, ERG26 catalyzes the oxidative decarboxylation that results in a reduction of the 3-beta-hydroxy group at the C-3 carbon to an oxo group, and ERG27 is responsible for the reduction of the keto group on the C-3. ERG28 has a role as a scaffold to help anchor ERG25, ERG26 and ERG27 to the endoplasmic reticulum and ERG29 regulates the activity of the iron-containing C4-methylsterol oxidase ERG25. Then, the sterol 24-C-methyltransferase ERG6 catalyzes the methyl transfer from S-adenosyl-methionine to the C-24 of zymosterol to form fecosterol. The C-8 sterol isomerase ERG2 catalyzes the reaction which results in unsaturation at C-7 in the B ring of sterols and thus converts fecosterol to episterol. The sterol-C5-desaturase ERG3 then catalyzes the introduction of a C-5 double bond in the B ring to produce 5-dehydroepisterol. The C-22 sterol desaturase ERG5 further converts 5-dehydroepisterol into ergosta-5,7,22,24(28)-tetraen-3beta-ol by forming the C-22(23) double bond in the sterol side chain. Finally, ergosta-5,7,22,24(28)-tetraen-3beta-ol is substrate of the C-24(28) sterol reductase ERG4 to produce ergosterol. The sequence is that of Delta(14)-sterol reductase ERG24 from Saccharomyces cerevisiae (strain ATCC 204508 / S288c) (Baker's yeast).